The chain runs to 439 residues: Ornithine aminotransferase, mitochondrial (439 aa).

The transit peptide at 1 to 25 (MFSKLAHLQRFAVLSRGVHSSVASA) directs the protein to the mitochondrion; in hepatic form. The N-terminal 35 residues, 1–35 (MFSKLAHLQRFAVLSRGVHSSVASATSVATKKTVQ), are a transit peptide targeting the mitochondrion; in renal form. N6-acetyllysine occurs at positions 49 and 66. Lys-102 carries the N6-succinyllysine modification. Position 107 is an N6-acetyllysine; alternate (Lys-107). Lys-107 bears the N6-succinyllysine; alternate mark. N6-(pyridoxal phosphate)lysine is present on Lys-292. N6-acetyllysine; alternate is present on Lys-362. Lys-362 carries the N6-succinyllysine; alternate modification. Residues Lys-386 and Lys-392 each carry the N6-acetyllysine modification. An N6-acetyllysine; alternate modification is found at Lys-405. Lys-405 carries the post-translational modification N6-succinyllysine; alternate. The residue at position 421 (Lys-421) is an N6-acetyllysine.

It belongs to the class-III pyridoxal-phosphate-dependent aminotransferase family. Homohexamer. Pyridoxal 5'-phosphate is required as a cofactor.

Its subcellular location is the mitochondrion matrix. It catalyses the reaction L-ornithine + 2-oxoglutarate = L-glutamate 5-semialdehyde + L-glutamate. Its pathway is amino-acid biosynthesis; L-proline biosynthesis; L-glutamate 5-semialdehyde from L-ornithine: step 1/1. Its function is as follows. Catalyzes the reversible interconversion of L-ornithine and 2-oxoglutarate to L-glutamate semialdehyde and L-glutamate. The polypeptide is Ornithine aminotransferase, mitochondrial (OAT) (Homo sapiens (Human)).